Reading from the N-terminus, the 407-residue chain is Chorismate synthase (407 aa).

NADP(+) is bound by residues Arg-43 and Arg-49. FMN-binding positions include 143–145 (RSS), 264–265 (QA), Gly-308, 323–327 (KPIST), and Arg-349.

Belongs to the chorismate synthase family. As to quaternary structure, homotetramer. FMNH2 is required as a cofactor.

It carries out the reaction 5-O-(1-carboxyvinyl)-3-phosphoshikimate = chorismate + phosphate. It participates in metabolic intermediate biosynthesis; chorismate biosynthesis; chorismate from D-erythrose 4-phosphate and phosphoenolpyruvate: step 7/7. Catalyzes the anti-1,4-elimination of the C-3 phosphate and the C-6 proR hydrogen from 5-enolpyruvylshikimate-3-phosphate (EPSP) to yield chorismate, which is the branch point compound that serves as the starting substrate for the three terminal pathways of aromatic amino acid biosynthesis. This reaction introduces a second double bond into the aromatic ring system. This chain is Chorismate synthase, found in Corynebacterium efficiens (strain DSM 44549 / YS-314 / AJ 12310 / JCM 11189 / NBRC 100395).